The chain runs to 346 residues: MANAYKQAGVDIEAGYEAVSRMKKHVQTTMRKEVLGGLGGFGGMFDLSKFALEEPVLVSGTDGVGTKLMLAFMADKHDTIGIDAVAMCVNDIVVQGAEPLFFLDYIACGKAEPSKIENIVKGISEGCRQAGCALIGGETAEMPGMYSTEEYDLAGFTVGIVDKKKIVTGEKIEAGHVLIGLASSGIHSNGYSLVRKVLLEDGELSLDRIYGRLELPLGEELLKPTKIYVKPILELLKNHEVYGMAHITGGGFIENIPRMLPEGIGAEIELGSWKIQPIFSLLQEVGKLEEKEMFNIFNMGIGMVVAVKEEDAKDIVRLLEEQGETARIIGRTVKGAGVTFNGGKAL.

This sequence belongs to the AIR synthase family.

Its subcellular location is the cytoplasm. It carries out the reaction 2-formamido-N(1)-(5-O-phospho-beta-D-ribosyl)acetamidine + ATP = 5-amino-1-(5-phospho-beta-D-ribosyl)imidazole + ADP + phosphate + H(+). It participates in purine metabolism; IMP biosynthesis via de novo pathway; 5-amino-1-(5-phospho-D-ribosyl)imidazole from N(2)-formyl-N(1)-(5-phospho-D-ribosyl)glycinamide: step 2/2. This chain is Phosphoribosylformylglycinamidine cyclo-ligase, found in Bacillus thuringiensis subsp. konkukian (strain 97-27).